The following is a 240-amino-acid chain: Proteasome subunit alpha (240 aa).

Belongs to the peptidase T1A family. As to quaternary structure, the 20S proteasome core is composed of 14 alpha and 14 beta subunits that assemble into four stacked heptameric rings, resulting in a barrel-shaped structure. The two inner rings, each composed of seven catalytic beta subunits, are sandwiched by two outer rings, each composed of seven alpha subunits. The catalytic chamber with the active sites is on the inside of the barrel. Has a gated structure, the ends of the cylinder being occluded by the N-termini of the alpha-subunits. Is capped by the proteasome-associated ATPase, ARC.

It is found in the cytoplasm. It participates in protein degradation; proteasomal Pup-dependent pathway. The formation of the proteasomal ATPase ARC-20S proteasome complex, likely via the docking of the C-termini of ARC into the intersubunit pockets in the alpha-rings, may trigger opening of the gate for substrate entry. Interconversion between the open-gate and close-gate conformations leads to a dynamic regulation of the 20S proteasome proteolysis activity. Its function is as follows. Component of the proteasome core, a large protease complex with broad specificity involved in protein degradation. In Frankia casuarinae (strain DSM 45818 / CECT 9043 / HFP020203 / CcI3), this protein is Proteasome subunit alpha.